Consider the following 132-residue polypeptide: Fatty acid-binding protein 1 (132 aa).

A2 carries the N-acetylalanine modification.

The protein belongs to the calycin superfamily. Fatty-acid binding protein (FABP) family.

The polypeptide is Fatty acid-binding protein 1 (FABP-1) (Fasciola gigantica (Giant liver fluke)).